The following is a 300-amino-acid chain: Ribokinase (300 aa).

Substrate-binding positions include 11–13 (SMD), 39–43 (GKGAN), and Glu-139. Residues Asn-183 and 210 to 215 (TLGSEG) contribute to the ATP site. Residues Asp-236 and Thr-238 each contribute to the K(+) site. 241 to 242 (GD) is a binding site for ATP. Asp-242 serves as a coordination point for substrate. The active-site Proton acceptor is the Asp-242. Residues Ser-272, Lys-275, and Gly-277 each contribute to the K(+) site.

Belongs to the carbohydrate kinase PfkB family. Ribokinase subfamily. As to quaternary structure, homodimer. Mg(2+) is required as a cofactor.

It is found in the cytoplasm. It catalyses the reaction D-ribose + ATP = D-ribose 5-phosphate + ADP + H(+). The protein operates within carbohydrate metabolism; D-ribose degradation; D-ribose 5-phosphate from beta-D-ribopyranose: step 2/2. With respect to regulation, activated by a monovalent cation that binds near, but not in, the active site. The most likely occupant of the site in vivo is potassium. Ion binding induces a conformational change that may alter substrate affinity. Functionally, catalyzes the phosphorylation of ribose at O-5 in a reaction requiring ATP and magnesium. The resulting D-ribose-5-phosphate can then be used either for sythesis of nucleotides, histidine, and tryptophan, or as a component of the pentose phosphate pathway. This is Ribokinase from Lactococcus lactis subsp. lactis (strain IL1403) (Streptococcus lactis).